Reading from the N-terminus, the 442-residue chain is Terpene cyclase aneC (442 aa).

Aspartate 196, asparagine 327, serine 331, and glutamate 335 together coordinate Mg(2+). (2E,6E)-farnesyl diphosphate-binding residues include arginine 419 and tyrosine 420.

Belongs to the terpene synthase family. Homodimer. The cofactor is Mg(2+).

The enzyme catalyses (2E,6E)-farnesyl diphosphate = dauca-4,7-diene + diphosphate. The protein operates within secondary metabolite biosynthesis. Its function is as follows. Terpene cyclase; part of the gene cluster that mediates the biosynthesis of aculenes, a unique type of norsesquiterpenes that contain a nordaucane skeleton linked to an L-proline moiety and are of mixed biosynthetic origin. The pathway begins with the synthesis of dauca-4,7-diene by the terpene cyclase aneC using farnesyl pyrophosphate (FPP) as substrate. The cytochrome P450 monooxygenase aneF then performs the initial oxidation at C-12 of dauca-4,7-diene to yield asperaculane D. Asperaculane D is substrate of the cytochrome P450 monooxygenase aneD for C-10 hydroxylation to yield asperaculane E. The cytochrome P450 monooxygenase aneG then converts asperaculane E into aculene D via C-2 oxidation. The monomodular nonribosomal peptide synthtase aneB adenylates L-proline and the thiohydrolase aneE transfers this activated L-proline derivative to aculenes D and C to produce respectively aculenes B and A. The dioxygenase aneA converts aculene D into aculene C, and aculene B into aculene A by introducing the 5,6-alkene moiety. Asperculanes A, B, C and F, as well as 14-prolyl asperculane C, might be shunt products of the pathway. The polypeptide is Terpene cyclase aneC (Aspergillus aculeatus (strain ATCC 16872 / CBS 172.66 / WB 5094)).